Consider the following 144-residue polypeptide: MLSIQEIMALIPHRYPFLLVDRIVELEPGVRAVGEKLVSANEPYFQGHFPGNPIMPGVLILEALAQTGAVAALSLPEHAGKLVLFAGIDGARFKRVVRPGDTLRLEVQLERMRRGIGKGQARATVADQLACEAELLFAVTDPTK.

Histidine 48 is a catalytic residue.

Belongs to the thioester dehydratase family. FabZ subfamily.

The protein resides in the cytoplasm. The enzyme catalyses a (3R)-hydroxyacyl-[ACP] = a (2E)-enoyl-[ACP] + H2O. Functionally, involved in unsaturated fatty acids biosynthesis. Catalyzes the dehydration of short chain beta-hydroxyacyl-ACPs and long chain saturated and unsaturated beta-hydroxyacyl-ACPs. The polypeptide is 3-hydroxyacyl-[acyl-carrier-protein] dehydratase FabZ (Chloroflexus aggregans (strain MD-66 / DSM 9485)).